The primary structure comprises 63 residues: Transmembrane protein ZNF593OS (63 aa).

A helical membrane pass occupies residues 30 to 50 (LAGVVATVLAVLGLGGSCYAV).

The protein localises to the membrane. In Homo sapiens (Human), this protein is Transmembrane protein ZNF593OS.